The primary structure comprises 255 residues: Probable transcriptional regulatory protein CMM_1817 (255 aa).

Belongs to the TACO1 family.

Its subcellular location is the cytoplasm. The chain is Probable transcriptional regulatory protein CMM_1817 from Clavibacter michiganensis subsp. michiganensis (strain NCPPB 382).